Here is a 174-residue protein sequence, read N- to C-terminus: Transcription antitermination protein NusB (174 aa).

Residues 1-28 are disordered; that stretch reads MVEPKKPFMRKPPPKTGDKKPGDRKANR. Residues 16 to 25 are compositionally biased toward basic and acidic residues; sequence TGDKKPGDRK.

This sequence belongs to the NusB family.

Involved in transcription antitermination. Required for transcription of ribosomal RNA (rRNA) genes. Binds specifically to the boxA antiterminator sequence of the ribosomal RNA (rrn) operons. This Rhodopseudomonas palustris (strain BisB5) protein is Transcription antitermination protein NusB.